We begin with the raw amino-acid sequence, 412 residues long: Squamosa promoter-binding-like protein 2 (412 aa).

The disordered stretch occupies residues 1 to 81 (MDWDAKMPSW…AAAAGKRARA (81 aa)). Positions 18–31 (PSGGGGGGGGGGGA) are enriched in gly residues. Composition is skewed to low complexity over residues 48 to 57 (VSAASAAPAA) and 67 to 81 (SSSS…RARA). Residues 89–167 (VPACSVEGCA…DGHNKRRRKP (79 aa)) form an SBP-type zinc finger. Residues cysteine 92, cysteine 97, cysteine 115, histidine 118, cysteine 134, cysteine 137, histidine 141, and cysteine 153 each coordinate Zn(2+). The Bipartite nuclear localization signal motif lies at 150–166 (KRSCRKRLDGHNKRRRK).

Expressed in stems, leaf sheaths, and young panicles.

The protein localises to the nucleus. Its function is as follows. Trans-acting factor that binds specifically to the consensus nucleotide sequence 5'-TNCGTACAA-3'. May be involved in panicle development. This is Squamosa promoter-binding-like protein 2 (SPL2) from Oryza sativa subsp. japonica (Rice).